The following is a 227-amino-acid chain: Cytochrome c oxidase subunit 2 (227 aa).

Over 1 to 14 the chain is Mitochondrial intermembrane; sequence MAYTFQLGLQDATS. Residues 15–45 traverse the membrane as a helical segment; the sequence is PIMEELTNFHDHTLMIVFLISSLVLYVISLM. Over 46-59 the chain is Mitochondrial matrix; sequence LTTKLTHTNTMDAQ. A helical membrane pass occupies residues 60-87; the sequence is EVETIWTILPAVILILIALPSLRILYMM. The Mitochondrial intermembrane portion of the chain corresponds to 88–227; sequence DEINNPVLTV…HFENWSASMI (140 aa). Cu cation is bound by residues His-161, Cys-196, Glu-198, Cys-200, His-204, and Met-207. Glu-198 contacts Mg(2+).

This sequence belongs to the cytochrome c oxidase subunit 2 family. As to quaternary structure, component of the cytochrome c oxidase (complex IV, CIV), a multisubunit enzyme composed of 14 subunits. The complex is composed of a catalytic core of 3 subunits MT-CO1, MT-CO2 and MT-CO3, encoded in the mitochondrial DNA, and 11 supernumerary subunits COX4I, COX5A, COX5B, COX6A, COX6B, COX6C, COX7A, COX7B, COX7C, COX8 and NDUFA4, which are encoded in the nuclear genome. The complex exists as a monomer or a dimer and forms supercomplexes (SCs) in the inner mitochondrial membrane with NADH-ubiquinone oxidoreductase (complex I, CI) and ubiquinol-cytochrome c oxidoreductase (cytochrome b-c1 complex, complex III, CIII), resulting in different assemblies (supercomplex SCI(1)III(2)IV(1) and megacomplex MCI(2)III(2)IV(2)). Found in a complex with TMEM177, COA6, COX18, COX20, SCO1 and SCO2. Interacts with TMEM177 in a COX20-dependent manner. Interacts with COX20. Interacts with COX16. It depends on Cu cation as a cofactor.

The protein resides in the mitochondrion inner membrane. It catalyses the reaction 4 Fe(II)-[cytochrome c] + O2 + 8 H(+)(in) = 4 Fe(III)-[cytochrome c] + 2 H2O + 4 H(+)(out). Component of the cytochrome c oxidase, the last enzyme in the mitochondrial electron transport chain which drives oxidative phosphorylation. The respiratory chain contains 3 multisubunit complexes succinate dehydrogenase (complex II, CII), ubiquinol-cytochrome c oxidoreductase (cytochrome b-c1 complex, complex III, CIII) and cytochrome c oxidase (complex IV, CIV), that cooperate to transfer electrons derived from NADH and succinate to molecular oxygen, creating an electrochemical gradient over the inner membrane that drives transmembrane transport and the ATP synthase. Cytochrome c oxidase is the component of the respiratory chain that catalyzes the reduction of oxygen to water. Electrons originating from reduced cytochrome c in the intermembrane space (IMS) are transferred via the dinuclear copper A center (CU(A)) of subunit 2 and heme A of subunit 1 to the active site in subunit 1, a binuclear center (BNC) formed by heme A3 and copper B (CU(B)). The BNC reduces molecular oxygen to 2 water molecules using 4 electrons from cytochrome c in the IMS and 4 protons from the mitochondrial matrix. This chain is Cytochrome c oxidase subunit 2 (MT-CO2), found in Niviventer culturatus (Oldfield white-bellied rat).